Reading from the N-terminus, the 257-residue chain is RING1 and YY1-binding protein B (257 aa).

Disordered regions lie at residues 1–24 (MGDKKSPTRPKRQAKPTADNGFWD) and 45–257 (RKGT…DESF). A RanBP2-type zinc finger spans residues 19–48 (DNGFWDCSVCTFRNSAEAFKCSICDVRKGT). The span at 74 to 129 (PKKEKKEKPERPEKDRAEEERPDINPPDEHPVEQRDKDKSEKEQPEKEKKDREKEI) shows a compositional bias: basic and acidic residues. Polar residues predominate over residues 149–168 (HQSPPSERNSIQSGKSTTKT). A compositionally biased stretch (basic residues) spans 169–178 (KNSHNSRPKL). Over residues 209-233 (TSSTSSSTVTSSASSEQQHQSSGSE) the composition is skewed to low complexity.

Its subcellular location is the nucleus. The protein resides in the cytoplasm. May be implicated in the regulation of the transcription as a repressor of the transcriptional activity of E4TF1. The protein is RING1 and YY1-binding protein B (rybpb) of Danio rerio (Zebrafish).